The sequence spans 185 residues: Tetratricopeptide repeat protein 36 homolog (185 aa).

TPR repeat units lie at residues 53-86 (SREL…AQRA), 88-119 (VLNN…ANDQ), and 125-158 (CHAH…GSKF).

This sequence belongs to the TTC36 family.

This is Tetratricopeptide repeat protein 36 homolog from Drosophila melanogaster (Fruit fly).